The sequence spans 39 residues: Potassium channel toxin alpha-KTx 2.16 (39 aa).

Disulfide bonds link Cys7–Cys29, Cys13–Cys34, and Cys17–Cys36. Ile39 is modified (isoleucine amide).

This sequence belongs to the short scorpion toxin superfamily. Potassium channel inhibitor family. Alpha-KTx 02 subfamily. In terms of tissue distribution, expressed by the venom gland.

The protein localises to the secreted. Its function is as follows. Blocks human voltage-gated potassium channels Kv1.2/KCNA2 (IC(50)=0.7 nM), Kv1.3/KCNA3 (IC(50)=26.2 nM) and blocks intermediate conductance calcium-activated potassium channel KCa3.1/KCNN4 (IC(50)=56 nM). In Centruroides tecomanus (Scorpion), this protein is Potassium channel toxin alpha-KTx 2.16.